The sequence spans 207 residues: Ribosomal RNA large subunit methyltransferase E (207 aa).

Gly-51, Trp-53, Asp-69, Asp-85, and Asp-108 together coordinate S-adenosyl-L-methionine. Residue Lys-148 is the Proton acceptor of the active site.

The protein belongs to the class I-like SAM-binding methyltransferase superfamily. RNA methyltransferase RlmE family.

It is found in the cytoplasm. The enzyme catalyses uridine(2552) in 23S rRNA + S-adenosyl-L-methionine = 2'-O-methyluridine(2552) in 23S rRNA + S-adenosyl-L-homocysteine + H(+). In terms of biological role, specifically methylates the uridine in position 2552 of 23S rRNA at the 2'-O position of the ribose in the fully assembled 50S ribosomal subunit. The protein is Ribosomal RNA large subunit methyltransferase E of Methanospirillum hungatei JF-1 (strain ATCC 27890 / DSM 864 / NBRC 100397 / JF-1).